Here is a 367-residue protein sequence, read N- to C-terminus: Glutamate 5-kinase (367 aa).

Lys9 provides a ligand contact to ATP. Ser49, Asp136, and Asn148 together coordinate substrate. ATP-binding positions include 168-169 (TD) and 210-216 (TGGMKSK). Positions 276–350 (SGQIEVDAGA…GMQSQDIQVR (75 aa)) constitute a PUA domain.

The protein belongs to the glutamate 5-kinase family.

It localises to the cytoplasm. It carries out the reaction L-glutamate + ATP = L-glutamyl 5-phosphate + ADP. It functions in the pathway amino-acid biosynthesis; L-proline biosynthesis; L-glutamate 5-semialdehyde from L-glutamate: step 1/2. In terms of biological role, catalyzes the transfer of a phosphate group to glutamate to form L-glutamate 5-phosphate. This Bacillus cereus (strain ATCC 14579 / DSM 31 / CCUG 7414 / JCM 2152 / NBRC 15305 / NCIMB 9373 / NCTC 2599 / NRRL B-3711) protein is Glutamate 5-kinase.